A 168-amino-acid polypeptide reads, in one-letter code: MATVTSTTVAIPSFSGLKTNAATKVSAMAKIPTSTSQSPRLCVRASLKDFGVALVATAASAVLASNALAVEVLLGASDGGLAFVPSSLEVSAGETIVFKNNAGFPHNVVFDEDEIPAGVDASKISMPEEDLLNAPGETYSVKLDAKGTYKFYCSPHQGAGMVGQVTVN.

Residues methionine 1–alanine 69 constitute a chloroplast transit peptide. Residues valine 70–asparagine 168 enclose the Plastocyanin-like domain. Cu cation contacts are provided by histidine 106, cysteine 153, histidine 156, and methionine 161.

It belongs to the plastocyanin family. Requires Cu(2+) as cofactor.

The protein localises to the plastid. It is found in the chloroplast thylakoid membrane. Functionally, participates in electron transfer between P700 and the cytochrome b6-f complex in photosystem I. The protein is Plastocyanin, chloroplastic (PETE) of Pisum sativum (Garden pea).